The sequence spans 241 residues: Zinc finger CCHC domain-containing protein 17 (241 aa).

In terms of domain architecture, S1 motif spans 16–88 (YTIFQGEVAM…DRIKVSLSMK (73 aa)). Ser-114 carries the post-translational modification Phosphoserine. Residues 131-148 (TTCKKCGCKGHFAKDCFM) form a CCHC-type zinc finger. Lys-144 carries the post-translational modification N6-acetyllysine. Positions 161–241 (EEEEKEEAKS…KKKHKKKHKE (81 aa)) are disordered. Residues 166–178 (EEAKSAEFEKPDP) are compositionally biased toward basic and acidic residues. The segment covering 182–198 (PSRKRKKEKKKKKHRDR) has biased composition (basic residues). Ser-183 is subject to Phosphoserine. A compositionally biased stretch (basic and acidic residues) spans 211-225 (DTGKRARHTSKDSKA). Positions 226 to 241 (AKKKKKKKKHKKKHKE) are enriched in basic residues.

Interacts with PNN. Associates with the 60S ribosomal subunit.

Its subcellular location is the nucleus. It localises to the nucleolus. The chain is Zinc finger CCHC domain-containing protein 17 (ZCCHC17) from Homo sapiens (Human).